Reading from the N-terminus, the 407-residue chain is E3 ubiquitin-protein ligase TRIM13 (407 aa).

The RING-type zinc-finger motif lies at 10–58; that stretch reads CPICCSLFDDPRVLPCSHNFCKKCLEGILEGNVRNSLWRSSPFKCPTCR. A B box-type zinc finger spans residues 89–131; that stretch reads PKMPVCKGHLGQPLNIFCLTDMQLICGICATRGEHTKHVFCSI. Zn(2+)-binding residues include Cys94, His97, Cys117, and His123. Residues 172–200 are a coiled coil; that stretch reads LQLLTKDSDKVKEFFEKLQYTLDQKKNEI. A helical transmembrane segment spans residues 316 to 336; it reads PLFVVVILLGLLIFFSPTMFL.

Interacts (via C-terminal domain) with VCP. Interacts with AKT1; the interaction ubiquitinates AKT1 and leads to its proteasomal degradation. Interacts with MDM2; the interaction ubiquitinates AKT1 and leads to its proteasomal degradation. Interacts with p62/SQSTM1. Interacts with TRAF6. Interacts with IKBKG/NEMO. In terms of processing, auto-ubiquitinated; requires the RING-type zinc finger. Auto-polyubiquitination leads to proteasomal degradation.

The protein resides in the endoplasmic reticulum membrane. It catalyses the reaction S-ubiquitinyl-[E2 ubiquitin-conjugating enzyme]-L-cysteine + [acceptor protein]-L-lysine = [E2 ubiquitin-conjugating enzyme]-L-cysteine + N(6)-ubiquitinyl-[acceptor protein]-L-lysine.. Its pathway is protein modification; protein ubiquitination. Its function is as follows. Endoplasmic reticulum (ER) membrane anchored E3 ligase involved in the retrotranslocation and turnover of membrane and secretory proteins from the ER through a set of processes named ER-associated degradation (ERAD). This process acts on misfolded proteins as well as in the regulated degradation of correctly folded proteins. Enhances ionizing radiation-induced p53/TP53 stability and apoptosis via ubiquitinating MDM2 and AKT1 and decreasing AKT1 kinase activity through MDM2 and AKT1 proteasomal degradation. Regulates ER stress-induced autophagy, and may act as a tumor suppressor. Also plays a role in innate immune response by stimulating NF-kappa-B activity in the TLR2 signaling pathway. Ubiquitinates TRAF6 via the 'Lys-29'-linked polyubiquitination chain resulting in NF-kappa-B activation. Participates as well in T-cell receptor-mediated NF-kappa-B activation. In the presence of TNF, modulates the IKK complex by regulating IKBKG/NEMO ubiquitination leading to the repression of NF-kappa-B. In Bos taurus (Bovine), this protein is E3 ubiquitin-protein ligase TRIM13 (TRIM13).